A 757-amino-acid polypeptide reads, in one-letter code: MDVNPTLLFLKVPAQNAISTTFPYTGDPPYSHGTGTGYTMDTVNRTHQYSEKGKWTTNTETGAHQLNPIDGPLPEDNEPSGYAQTDCVLEAMAFLEESHPGIFENSCLETMEVIQQTRVDKLTQGRQTYDWTLNRNQPAATALANTIEVFRSNGLTANESGRLIDFLKDVIESMDKEEMEITTHFQRKRRVRDNMTKKMVTQRTIGKKKQRLNKRSYLIRALTLNTMTKDAERGKLKRRAIATPGMQIRGFVYFVETLARSICEKLEQSGLPVGGNEKKAKLANVVRKMMTNSQDTELSFTITGDNTKWNENQNPRMFLAMITYITRNQPEWFRNVLSIAPIMFSNKMARLGKGYMFKSKSMKLRTQIPAEMLASIDLKYFNESTRKKIEKIRPLLIDGTVSLSPGMMMGMFNMLSTVLGVSILNLGQKKYTKTTYWWDGLQSSDDFALIVNAPNHEGIQAGVDRFYRTCKLVGINMSKKKSYINRTGTFEFTSFFYRYGFVANFSMELPSFGVSGINESADMSIGVTVIKNNMINNDLGPATAQLALQLFIKDYRYTYRCHRGDTQIQTRRSFELKKLWEQTRSKAGLLVSDGGPNLYNIRNLHIPEVCLKWELMDEDYQGRLCNPLNPFVSHKEIESVNNAVVMPAHGPAKSMEYDAVATTHSWIPKRNRSILNTSQRGILEDEQMYQKCCNLFEKFFPSSSYRRPVGISSMVEAMVSRARIDARIDFESGRIKKEEFAEIMKICSTIEELRRQK.

The interval threonine 56 to glutamate 78 is disordered. 2 consecutive short sequence motifs (nuclear localization signal) follow at residues arginine 187 to methionine 195 and arginine 203 to serine 216. A promoter-binding site region spans residues arginine 249–glutamate 256. The 198-residue stretch at valine 286–tyrosine 483 folds into the RdRp catalytic domain.

Belongs to the influenza viruses polymerase PB1 family. As to quaternary structure, influenza RNA polymerase is composed of three subunits: PB1, PB2 and PA. Interacts (via N-terminus) with PA (via C-terminus). Interacts (via C-terminus) with PB2 (via N-terminus); this interaction is essential for transcription initiation. Post-translationally, phosphorylated by host PRKCA.

The protein resides in the host nucleus. It localises to the host cytoplasm. The catalysed reaction is RNA(n) + a ribonucleoside 5'-triphosphate = RNA(n+1) + diphosphate. RNA-dependent RNA polymerase which is responsible for replication and transcription of virus RNA segments. The transcription of viral mRNAs occurs by a unique mechanism called cap-snatching. 5' methylated caps of cellular mRNAs are cleaved after 10-13 nucleotides by PA. In turn, these short capped RNAs are used as primers by PB1 for transcription of viral mRNAs. During virus replication, PB1 initiates RNA synthesis and copy vRNA into complementary RNA (cRNA) which in turn serves as a template for the production of more vRNAs. In Aves (Human), this protein is RNA-directed RNA polymerase catalytic subunit.